A 420-amino-acid polypeptide reads, in one-letter code: Serine/threonine-protein kinase PCRK2 (420 aa).

The segment at 1 to 64 (MKCFLFPLGD…SNTSMSAREN (64 aa)) is disordered. A compositionally biased stretch (polar residues) spans 22–36 (SPTSNFSDVNKSGSD). A compositionally biased stretch (low complexity) spans 42–58 (VSGTSTVSSTGRNSNTS). T70 carries the post-translational modification Phosphothreonine. In terms of domain architecture, Protein kinase spans 81-366 (FSRSGMIGEG…EVLEMVTKIV (286 aa)). ATP is bound by residues 87-95 (IGEGGFGCV) and K115. Y164 bears the Phosphotyrosine mark. D215 (proton acceptor) is an active-site residue. Residues S219 and S249 each carry the phosphoserine modification. A phosphothreonine mark is found at T250 and T255. Y263 is modified (phosphotyrosine). A disordered region spans residues 369-396 (SSPGNGGKKPQLVPLKSQETSRVEEGKN). The segment covering 387–396 (ETSRVEEGKN) has biased composition (basic and acidic residues).

It belongs to the protein kinase superfamily. Ser/Thr protein kinase family. Interacts with FLS2.

The protein localises to the cell membrane. It catalyses the reaction L-seryl-[protein] + ATP = O-phospho-L-seryl-[protein] + ADP + H(+). The enzyme catalyses L-threonyl-[protein] + ATP = O-phospho-L-threonyl-[protein] + ADP + H(+). Functionally, functions redundantly with PCRK1 in basal resistance against bacterial pathogens and in regulation of plant immunity. Functions together with PCRK1 downstream of the pathogen-associated molecular pattern (PAMP) receptor FLS2. Contributes to the induction of SARD1 and CBP60G, which are transcriptional activator of ICS1, an enzyme involved in salicylate (SA) biosynthesis upon pathogen attack. The sequence is that of Serine/threonine-protein kinase PCRK2 from Arabidopsis thaliana (Mouse-ear cress).